A 260-amino-acid polypeptide reads, in one-letter code: Diphthine synthase (260 aa).

Residues Leu-9, Asp-85, Ile-88, Thr-113–Ala-114, Leu-168, Ala-202, and His-227 contribute to the S-adenosyl-L-methionine site.

Belongs to the diphthine synthase family. As to quaternary structure, homodimer.

It catalyses the reaction 2-[(3S)-amino-3-carboxypropyl]-L-histidyl-[translation elongation factor 2] + 3 S-adenosyl-L-methionine = diphthine-[translation elongation factor 2] + 3 S-adenosyl-L-homocysteine + 3 H(+). It functions in the pathway protein modification; peptidyl-diphthamide biosynthesis. Functionally, S-adenosyl-L-methionine-dependent methyltransferase that catalyzes the trimethylation of the amino group of the modified target histidine residue in translation elongation factor 2 (EF-2), to form an intermediate called diphthine. The three successive methylation reactions represent the second step of diphthamide biosynthesis. This chain is Diphthine synthase, found in Haloquadratum walsbyi (strain DSM 16790 / HBSQ001).